The chain runs to 118 residues: Small ribosomal subunit protein uS13 (118 aa).

The interval 94 to 118 (GLPVRGQRTKTNARTRKGPCKPIKK) is disordered.

It belongs to the universal ribosomal protein uS13 family. As to quaternary structure, part of the 30S ribosomal subunit. Forms a loose heterodimer with protein S19. Forms two bridges to the 50S subunit in the 70S ribosome.

Functionally, located at the top of the head of the 30S subunit, it contacts several helices of the 16S rRNA. In the 70S ribosome it contacts the 23S rRNA (bridge B1a) and protein L5 of the 50S subunit (bridge B1b), connecting the 2 subunits; these bridges are implicated in subunit movement. Contacts the tRNAs in the A and P-sites. This chain is Small ribosomal subunit protein uS13, found in Salmonella typhi.